A 465-amino-acid polypeptide reads, in one-letter code: MVTQATSVRWQLWIVAFGFFMQTLDTTIVNTALPSIAASLGENPLRMQSVIVSYVLTVAVMLPASGWLADRIGVKWVFFSAIILFTFGSLMCAQSATLNELILSRVLQGVGDAMMVPVGRLTVMKIVPREQYMAAMAFVTLPGQIGPLVGPALGGFLVEFASWHWIFLINLPVGVIGALATLLLMPNHKMSTRRFDISGFIMLAIGMATLTLALDGHTGLGLSPLAIAGLILCGVIALGSYWWHALGNRFALFSLHLFKNKIYTLGLVGSMSARIGSGMLPFMTPIFLQIGLGFSPFHAGLMMIPMIIGSMGMKRIIVQVVNRFGYRRVLVNATLLLAVVSLSLPLVAIMGWTLLMPVVLFFQGMLNALRFSTMNTLTLKTLPDRLASSGNSLLSMAMQLSMSIGVSTAGILLGTFAHHQVATNTPATHSAFLYSYLCMAIIIALPALIFNRVPPDTGANRHLAR.

Transmembrane regions (helical) follow at residues 12–32 (LWIVAFGFFMQTLDTTIVNTA), 49–69 (SVIVSYVLTVAVMLPASGWLA), 72–92 (IGVKWVFFSAIILFTFGSLMC), 138–158 (FVTLPGQIGPLVGPALGGFLV), 165–185 (WIFLINLPVGVIGALATLLLM), 195–215 (FDISGFIMLAIGMATLTLALD), 219–239 (GLGLSPLAIAGLILCGVIALG), 267–287 (LVGSMSARIGSGMLPFMTPIF), 290–310 (IGLGFSPFHAGLMMIPMIIGS), 329–351 (VLVNATLLLAVVSLSLPLVAIMG), 393–413 (LLSMAMQLSMSIGVSTAGILL), and 430–450 (SAFLYSYLCMAIIIALPALIF).

This sequence belongs to the major facilitator superfamily. TCR/Tet family.

The protein resides in the cell inner membrane. This is Putative multidrug resistance protein MdtD from Yersinia pseudotuberculosis serotype I (strain IP32953).